The sequence spans 91 residues: Probable Fe(2+)-trafficking protein (91 aa).

It belongs to the Fe(2+)-trafficking protein family.

Functionally, could be a mediator in iron transactions between iron acquisition and iron-requiring processes, such as synthesis and/or repair of Fe-S clusters in biosynthetic enzymes. The polypeptide is Probable Fe(2+)-trafficking protein (Shewanella denitrificans (strain OS217 / ATCC BAA-1090 / DSM 15013)).